We begin with the raw amino-acid sequence, 22 residues long: Recombination and repair protein (22 aa).

The protein belongs to the RecA family.

Important in genetic recombination, DNA repair, and replication. Possesses pairing and strand-transfer activity. Interacts with dda and gene 32 proteins. The sequence is that of Recombination and repair protein (UVSX) from Escherichia coli (Bacteriophage T2).